An 83-amino-acid chain; its full sequence is Cytotoxin A5 (83 aa).

The first 21 residues, 1-21, serve as a signal peptide directing secretion; that stretch reads MKTLLLTMVVVTIVCLDLGYT. Disulfide bonds link Cys24–Cys43, Cys36–Cys61, Cys65–Cys76, and Cys77–Cys82.

The protein belongs to the three-finger toxin family. Short-chain subfamily. Orphan group XV sub-subfamily. As to expression, expressed by the venom gland.

The protein resides in the secreted. It localises to the target cell membrane. In terms of biological role, non-cytotoxic protein that does not show lytic and hemolytic activities, but can induce aggregation and fusion of sphingomyelin vesicles. It binds to integrin alpha-V/beta-3 (ITGAV/ITGB3) with high affinity, and it inhibits osteoclast differentiation and bone resorption in mice, probably due to binding to integrin alpha-V/beta-3. The sequence is that of Cytotoxin A5 from Naja atra (Chinese cobra).